Here is a 695-residue protein sequence, read N- to C-terminus: UvrABC system protein B (695 aa).

The Helicase ATP-binding domain maps to Lys-25–Ala-176. Gly-38 to Thr-45 lines the ATP pocket. The Beta-hairpin signature appears at Tyr-91–Ile-114. The Helicase C-terminal domain occupies Leu-454–Asn-617. In terms of domain architecture, UVR spans Pro-652–Arg-687.

Belongs to the UvrB family. In terms of assembly, forms a heterotetramer with UvrA during the search for lesions. Interacts with UvrC in an incision complex.

The protein localises to the cytoplasm. In terms of biological role, the UvrABC repair system catalyzes the recognition and processing of DNA lesions. A damage recognition complex composed of 2 UvrA and 2 UvrB subunits scans DNA for abnormalities. Upon binding of the UvrA(2)B(2) complex to a putative damaged site, the DNA wraps around one UvrB monomer. DNA wrap is dependent on ATP binding by UvrB and probably causes local melting of the DNA helix, facilitating insertion of UvrB beta-hairpin between the DNA strands. Then UvrB probes one DNA strand for the presence of a lesion. If a lesion is found the UvrA subunits dissociate and the UvrB-DNA preincision complex is formed. This complex is subsequently bound by UvrC and the second UvrB is released. If no lesion is found, the DNA wraps around the other UvrB subunit that will check the other stand for damage. This Synechococcus sp. (strain JA-2-3B'a(2-13)) (Cyanobacteria bacterium Yellowstone B-Prime) protein is UvrABC system protein B.